Here is a 297-residue protein sequence, read N- to C-terminus: Adrenocorticotropic hormone receptor (297 aa).

At 1–23 (MKHITDLYESVNSTMSNKSDCPP) the chain is on the extracellular side. N-linked (GlcNAc...) asparagine glycosylation is found at N12 and N17. 2 disulfides stabilise this stretch: C21–C253 and C245–C251. The chain crosses the membrane as a helical span at residues 24–49 (VVLPEEVFFTISVIGVLENLIVLLAV). Topologically, residues 50–58 (IKNKNLQSP) are cytoplasmic. The helical transmembrane segment at 59 to 79 (MYFFICSLAISDMLGSLYKIL) threads the bilayer. At 80 to 104 (ENILIIFRNMGYLEPRGGFESTADD) the chain is on the extracellular side. A helical membrane pass occupies residues 105–126 (VVDSLFILSLLGSICSLSAIAA). The Cytoplasmic portion of the chain corresponds to 127–147 (DRYITIFHALQYQRLVTPRRA). The helical transmembrane segment at 148-168 (AVVLLIIWACCIGSGITIVTF) threads the bilayer. The Extracellular portion of the chain corresponds to 169–180 (SHHVPAVIAFTA). Residues 181 to 199 (LFPLMLVFILCLYGHMFLL) form a helical membrane-spanning segment. Residues 200–217 (ARSHARRVSTLPRANMKG) are Cytoplasmic-facing. Residues 218-244 (AITLTVLLGVFIFCWAPFVLHILLMTF) traverse the membrane as a helical segment. The Extracellular portion of the chain corresponds to 245–256 (CPADPYCACYLA). The chain crosses the membrane as a helical span at residues 257 to 278 (LFQVNAVLIMCNAIIDPFIYAF). Over 279–297 (RSPELRDAFKKMIICKRYP) the chain is Cytoplasmic. Residue C293 is the site of S-palmitoyl cysteine attachment.

This sequence belongs to the G-protein coupled receptor 1 family. In terms of assembly, homodimer. Interacts with corticotropin (ACTH). Interacts with MRAP; this interaction targets MC2R to the plasma membrane. Interacts with MRAP2; competing with MRAP for binding to MC2R and impairing the binding of corticotropin (ACTH). In terms of processing, ubiquitinated by MGRN1 that may be involved in post-endocytic trafficking and/or degradation of internalized receptor. In terms of tissue distribution, expressed in skin and adrenal gland tissues.

The protein localises to the cell membrane. Hormone receptor primarily expressed in adrenal cortex that plays a key role in regulating adrenocortical function. Upon corticotropin (ACTH) binding, facilitates the release of adrenal glucocorticoids, including cortisol and corticosterone. In addition, MC2R is required for fetal and neonatal adrenal gland development. Mechanistically, activates adenylate cyclase (cAMP), the MAPK cascade as well as the cAMP-dependent protein kinase A pathway leading to steroidogenic factor 1/NR5A1-mediated transcriptional activation. In Sus scrofa (Pig), this protein is Adrenocorticotropic hormone receptor (MC2R).